The primary structure comprises 294 residues: Universal stress protein MSMEG_3950/MSMEI_3859 (294 aa).

Position 13 (glycine 13) interacts with ATP. Residue lysine 109 forms an Isoglutamyl lysine isopeptide (Lys-Gln) (interchain with Q-Cter in protein Pup) linkage. ATP contacts are provided by residues 117–123, 131–132, glycine 164, aspartate 197, 261–267, and 275–277; these read GNRGMGA, ST, GSHGRGG, and SVS.

This sequence belongs to the universal stress protein A family.

This chain is Universal stress protein MSMEG_3950/MSMEI_3859, found in Mycolicibacterium smegmatis (strain ATCC 700084 / mc(2)155) (Mycobacterium smegmatis).